We begin with the raw amino-acid sequence, 206 residues long: Large ribosomal subunit protein uL4 (206 aa).

Belongs to the universal ribosomal protein uL4 family. Part of the 50S ribosomal subunit.

Functionally, one of the primary rRNA binding proteins, this protein initially binds near the 5'-end of the 23S rRNA. It is important during the early stages of 50S assembly. It makes multiple contacts with different domains of the 23S rRNA in the assembled 50S subunit and ribosome. Forms part of the polypeptide exit tunnel. The polypeptide is Large ribosomal subunit protein uL4 (Methylorubrum extorquens (strain CM4 / NCIMB 13688) (Methylobacterium extorquens)).